We begin with the raw amino-acid sequence, 262 residues long: tRNA U34 carboxymethyltransferase (262 aa).

Carboxy-S-adenosyl-L-methionine-binding positions include lysine 25, tryptophan 39, lysine 44, glycine 63, 114 to 115 (VE), tyrosine 135, and arginine 250.

It belongs to the class I-like SAM-binding methyltransferase superfamily. CmoB family. In terms of assembly, homotetramer.

The enzyme catalyses carboxy-S-adenosyl-L-methionine + 5-hydroxyuridine(34) in tRNA = 5-carboxymethoxyuridine(34) in tRNA + S-adenosyl-L-homocysteine + H(+). Functionally, catalyzes carboxymethyl transfer from carboxy-S-adenosyl-L-methionine (Cx-SAM) to 5-hydroxyuridine (ho5U) to form 5-carboxymethoxyuridine (cmo5U) at position 34 in tRNAs. This chain is tRNA U34 carboxymethyltransferase, found in Helicobacter acinonychis (strain Sheeba).